A 639-amino-acid polypeptide reads, in one-letter code: Chaperone protein DnaK (639 aa).

T197 bears the Phosphothreonine; by autocatalysis mark. Composition is skewed to basic and acidic residues over residues 514–529 and 540–553; these read AEENAEADKDRKDLVE and GTEKSLEEHGEKVD. Disordered stretches follow at residues 514 to 554 and 603 to 639; these read AEEN…KVDP and DKAEAAQDGAPEEEERGVDEDIVDADFEDLDDDRKRG. Over residues 612-633 the composition is skewed to acidic residues; that stretch reads APEEEERGVDEDIVDADFEDLD.

This sequence belongs to the heat shock protein 70 family.

Functionally, acts as a chaperone. This chain is Chaperone protein DnaK, found in Jannaschia sp. (strain CCS1).